Here is a 91-residue protein sequence, read N- to C-terminus: DNA-binding protein HU-beta 2 (91 aa).

Belongs to the bacterial histone-like protein family.

Histone-like DNA-binding protein which is capable of wrapping DNA to stabilize it, and thus to prevent its denaturation under extreme environmental conditions. The polypeptide is DNA-binding protein HU-beta 2 (hupB2) (Neisseria meningitidis serogroup A / serotype 4A (strain DSM 15465 / Z2491)).